The chain runs to 140 residues: Large ribosomal subunit protein uL11 (140 aa).

Belongs to the universal ribosomal protein uL11 family. Part of the ribosomal stalk of the 50S ribosomal subunit. Interacts with L10 and the large rRNA to form the base of the stalk. L10 forms an elongated spine to which L12 dimers bind in a sequential fashion forming a multimeric L10(L12)X complex. Post-translationally, one or more lysine residues are methylated.

Its function is as follows. Forms part of the ribosomal stalk which helps the ribosome interact with GTP-bound translation factors. The chain is Large ribosomal subunit protein uL11 from Desulfovibrio desulfuricans (strain ATCC 27774 / DSM 6949 / MB).